The following is a 562-amino-acid chain: MSDKQQVAAALAQALPEMDVKEIEAKIERPKDSSNGDYAFPTFFLAKTLHKAPQMIASELVEKVDQNGFEKVVVAGPYINFFLDKAQVGAKILQTILADPEHYGEIDLGHQSNVTIDYSSPNIAKPMGMGHLRSTMIGEAVARILEKVNYNLIRIDYLGDWGTQFGKLMAAYEMWGDEAEVKKDPINTLLKYYVRINNEADEHPEYTEAGRNWFAKLEHGDEEAWRLWHWFREVSLERFQRVYKMLDVNFDSFNGEAFSAQKMEEPIQLLRDKDLLKPSRGAEIVDLDEYNLPPLLIIKSNGTTTYITRDLATALFRKRMYGHAKSLYVVGAEQETYFKQLRAALKEMGFNWWDQIEHISFGLMNLNGKKMSTRKGNVVSLEDVLNDSIDLARKQIAEKNPDLENADEVAKEVGVGAVIFHDLKNYRRNAVNFKLEDVVKFEGETGPYVQYARARAESILRKGGIRDFSDVDLTKAGAEAWELISFLGQYSEAIKRAALNYDPSVIAKYALELAKKFNQYYAHTRILDKDEAQPARLALTQAVSDVLKSALDLLDIKAPDEM.

The short motif at 121–131 (PNIAKPMGMGH) is the 'HIGH' region element.

The protein belongs to the class-I aminoacyl-tRNA synthetase family. Monomer.

Its subcellular location is the cytoplasm. It catalyses the reaction tRNA(Arg) + L-arginine + ATP = L-arginyl-tRNA(Arg) + AMP + diphosphate. This Limosilactobacillus reuteri (strain DSM 20016) (Lactobacillus reuteri) protein is Arginine--tRNA ligase.